We begin with the raw amino-acid sequence, 423 residues long: Histidine--tRNA ligase (423 aa).

It belongs to the class-II aminoacyl-tRNA synthetase family. Homodimer.

It is found in the cytoplasm. The enzyme catalyses tRNA(His) + L-histidine + ATP = L-histidyl-tRNA(His) + AMP + diphosphate + H(+). This chain is Histidine--tRNA ligase, found in Orientia tsutsugamushi (strain Ikeda) (Rickettsia tsutsugamushi).